The chain runs to 85 residues: MADGNTPNTGVAHDQLRSIVERIERLEEEKAALANDIKEVYAEAKGNGFDTKTLRQVVRIRKQDKAERQEQEAILELYLSALGMA.

This sequence belongs to the UPF0335 family.

The chain is UPF0335 protein Plav_2034 from Parvibaculum lavamentivorans (strain DS-1 / DSM 13023 / NCIMB 13966).